The chain runs to 365 residues: Probable protein kinase At2g41970 (365 aa).

A disordered region spans residues 1-50 (MFCCGGADEEPAGPPANQYAAPPNKAGNPNFGGGNRGEPRNPNAPRSGAP). A Protein kinase domain is found at 73-354 (FGNKALIGEG…IVVKALQPLL (282 aa)). Residues 79 to 87 (IGEGSYGRV) and lysine 100 each bind ATP. At tyrosine 146 the chain carries Phosphotyrosine. Catalysis depends on aspartate 204, which acts as the Proton acceptor. Serine 208 and serine 238 each carry phosphoserine. Phosphothreonine occurs at positions 239 and 244. Residue tyrosine 252 is modified to Phosphotyrosine.

The protein belongs to the protein kinase superfamily. Tyr protein kinase family.

The protein is Probable protein kinase At2g41970 of Arabidopsis thaliana (Mouse-ear cress).